The following is a 199-amino-acid chain: Extracellular superoxide dismutase [Cu-Zn] (199 aa).

A signal peptide spans 1 to 20 (MMIASFAIFLSHIIFITYAT). N-linked (GlcNAc...) asparagine glycosylation is found at asparagine 33, asparagine 60, and asparagine 70. Residues histidine 89, histidine 91, and histidine 106 each coordinate Cu cation. A disulfide bridge links cysteine 100 with cysteine 192. Histidine 106 serves as a coordination point for Zn(2+). A glycan (N-linked (GlcNAc...) asparagine) is linked at asparagine 111. Histidine 114, histidine 123, and aspartate 126 together coordinate Zn(2+). Cu cation is bound at residue histidine 163.

The protein belongs to the Cu-Zn superoxide dismutase family. In terms of assembly, homodimer. Requires Cu cation as cofactor. Zn(2+) serves as cofactor.

The protein localises to the secreted. The protein resides in the extracellular space. It catalyses the reaction 2 superoxide + 2 H(+) = H2O2 + O2. In terms of biological role, protect the extracellular space from toxic effect of reactive oxygen intermediates by converting superoxide radicals into hydrogen peroxide and oxygen. May act in the parasite defense by neutralizing superoxide generated by activated leukocytes, thus acting as both an antioxidant and an anti-inflammatory factor. The polypeptide is Extracellular superoxide dismutase [Cu-Zn] (Brugia pahangi (Filarial nematode worm)).